The following is a 438-amino-acid chain: Delta(14)-sterol reductase ERG24 (438 aa).

The Lumenal segment spans residues 1–13; it reads MVSALNPRTTEFE. A helical membrane pass occupies residues 14 to 34; it reads FGGLIGALGISIGLPVFTIIL. Over 35 to 71 the chain is Cytoplasmic; sequence NQMIRPDYFIKGFFQNFDIVELWNGIKPLRYYLGNRE. A helical membrane pass occupies residues 72–90; sequence LWTVYCLWYGILAVLDVIL. The Lumenal portion of the chain corresponds to 91 to 109; it reads PGRVMKGVQLRDGSKLSYK. The helical transmembrane segment at 110–127 threads the bilayer; that stretch reads INGIAMSTTLVLVLAIRW. Residues 128–147 lie on the Cytoplasmic side of the membrane; it reads KLTDGQLPELQYLYENHVSL. The helical transmembrane segment at 148 to 172 threads the bilayer; the sequence is CIISILFSFFLATYCYVASFIPLIF. At 173 to 242 the chain is on the lumenal side; that stretch reads KKNGNGKREK…LHHHYLKTGK (70 aa). A helical transmembrane segment spans residues 243 to 263; it reads INDALVLVNFLQGFYIFDGVL. Topologically, residues 264–308 are cytoplasmic; the sequence is NEEGVLTMMDITTDGFGFMLAFGDLSLVPFTYSLQARYLSVSPVE. The helical transmembrane segment at 309-328 threads the bilayer; the sequence is LGWVKVVGILAIMFLGFHIF. At 329–368 the chain is on the lumenal side; sequence HSANKQKSEFRQGKLENLKSIQTKRGTKLLCDGWWAKSQH. NADP(+)-binding positions include Lys335, Arg339, Leu358, Trp363, 370-371, Asp410, 414-418, and Tyr425; these read NY and CRLKY. Residues 369-387 form a helical membrane-spanning segment; that stretch reads INYFGDWLISLSWCLATWF. Residues 388–438 lie on the Cytoplasmic side of the membrane; the sequence is QTPLTYYYSLYFATLLLHRQQRDEHKCRLKYGENWEEYERKVPYKIIPYVY.

This sequence belongs to the ERG4/ERG24 family.

It is found in the membrane. It catalyses the reaction 4,4-dimethyl-5alpha-cholesta-8,24-dien-3beta-ol + NADP(+) = 4,4-dimethyl-5alpha-cholesta-8,14,24-trien-3beta-ol + NADPH + H(+). It functions in the pathway steroid biosynthesis; zymosterol biosynthesis; zymosterol from lanosterol: step 2/6. With respect to regulation, inhibited by the morpholine antifungal drug fenpropimorph. Functionally, delta(14)-sterol reductase; part of the third module of ergosterol biosynthesis pathway that includes the late steps of the pathway. ERG24 reduces the C14=C15 double bond of 4,4-dimethyl-cholesta-8,14,24-trienol to produce 4,4-dimethyl-cholesta-8,24-dienol. The third module or late pathway involves the ergosterol synthesis itself through consecutive reactions that mainly occur in the endoplasmic reticulum (ER) membrane. Firstly, the squalene synthase ERG9 catalyzes the condensation of 2 farnesyl pyrophosphate moieties to form squalene, which is the precursor of all steroids. Squalene synthase is crucial for balancing the incorporation of farnesyl diphosphate (FPP) into sterol and nonsterol isoprene synthesis. Secondly, the squalene epoxidase ERG1 catalyzes the stereospecific oxidation of squalene to (S)-2,3-epoxysqualene, which is considered to be a rate-limiting enzyme in steroid biosynthesis. Then, the lanosterol synthase ERG7 catalyzes the cyclization of (S)-2,3 oxidosqualene to lanosterol, a reaction that forms the sterol core. In the next steps, lanosterol is transformed to zymosterol through a complex process involving various demethylation, reduction and desaturation reactions. The lanosterol 14-alpha-demethylase ERG11 (also known as CYP51) catalyzes C14-demethylation of lanosterol to produce 4,4'-dimethyl cholesta-8,14,24-triene-3-beta-ol, which is critical for ergosterol biosynthesis. The C-14 reductase ERG24 reduces the C14=C15 double bond of 4,4-dimethyl-cholesta-8,14,24-trienol to produce 4,4-dimethyl-cholesta-8,24-dienol. 4,4-dimethyl-cholesta-8,24-dienol is substrate of the C-4 demethylation complex ERG25-ERG26-ERG27 in which ERG25 catalyzes the three-step monooxygenation required for the demethylation of 4,4-dimethyl and 4alpha-methylsterols, ERG26 catalyzes the oxidative decarboxylation that results in a reduction of the 3-beta-hydroxy group at the C-3 carbon to an oxo group, and ERG27 is responsible for the reduction of the keto group on the C-3. ERG28 has a role as a scaffold to help anchor ERG25, ERG26 and ERG27 to the endoplasmic reticulum and ERG29 regulates the activity of the iron-containing C4-methylsterol oxidase ERG25. Then, the sterol 24-C-methyltransferase ERG6 catalyzes the methyl transfer from S-adenosyl-methionine to the C-24 of zymosterol to form fecosterol. The C-8 sterol isomerase ERG2 catalyzes the reaction which results in unsaturation at C-7 in the B ring of sterols and thus converts fecosterol to episterol. The sterol-C5-desaturase ERG3 then catalyzes the introduction of a C-5 double bond in the B ring to produce 5-dehydroepisterol. The C-22 sterol desaturase ERG5 further converts 5-dehydroepisterol into ergosta-5,7,22,24(28)-tetraen-3beta-ol by forming the C-22(23) double bond in the sterol side chain. Finally, ergosta-5,7,22,24(28)-tetraen-3beta-ol is substrate of the C-24(28) sterol reductase ERG4 to produce ergosterol. This chain is Delta(14)-sterol reductase ERG24, found in Saccharomyces cerevisiae (strain ATCC 204508 / S288c) (Baker's yeast).